A 130-amino-acid chain; its full sequence is Small ribosomal subunit protein uS9 (130 aa).

Belongs to the universal ribosomal protein uS9 family.

This is Small ribosomal subunit protein uS9 from Verminephrobacter eiseniae (strain EF01-2).